A 545-amino-acid polypeptide reads, in one-letter code: Transducer protein Htr7 (545 aa).

3 helical membrane passes run 10–30 (AVVA…AAAL), 44–64 (FWMA…SLML), and 80–100 (PLMA…LAIV). Residues 111–157 (AQRRQEAEEERAEAERAREKAEQKQAEAERQTAEAESAKQDARERSA) form a disordered region. Residues 123 to 157 (EAERAREKAEQKQAEAERQTAEAESAKQDARERSA) show a composition bias toward basic and acidic residues. The 54-residue stretch at 164–217 (ADLESQATEVGATLEAASDGDLTARVDATTDNAEIAEVATVVNDMLTTMERTID) folds into the HAMP domain. One can recognise a Methyl-accepting transducer domain in the interval 236–476 (GAKEIQDASQ…RVVSSVDDIA (241 aa)). Position 281 is a glutamate methyl ester (Glu) (glutamate 281). A disordered region spans residues 521–545 (LNEFRTEATGTAHGEATDAPAGQSD). The segment covering 527-539 (EATGTAHGEATDA) has biased composition (low complexity).

The protein belongs to the methyl-accepting chemotaxis (MCP) protein family. Methylated by CheR.

The protein localises to the cell membrane. In terms of biological role, potentially involved in chemo- or phototactic signal transduction. The sequence is that of Transducer protein Htr7 (htr7) from Halobacterium salinarum (strain ATCC 29341 / DSM 671 / R1).